The primary structure comprises 98 residues: UPF0175 protein VNG_0066H (98 aa).

This sequence belongs to the UPF0175 family.

This Halobacterium salinarum (strain ATCC 700922 / JCM 11081 / NRC-1) (Halobacterium halobium) protein is UPF0175 protein VNG_0066H.